Here is a 1070-residue protein sequence, read N- to C-terminus: Carbamoyl phosphate synthase large chain (1070 aa).

The interval 1 to 401 (MPKRDDIKTI…ALLKAVRSLE (401 aa)) is carboxyphosphate synthetic domain. Residues Arg-129, Arg-169, Gly-175, Gly-176, Lys-208, Ile-210, Glu-215, Gly-241, Ile-242, His-243, Gln-284, and Glu-298 each coordinate ATP. Residues 133–327 (RDLMNELGEP…IAKLAAKIAV (195 aa)) enclose the ATP-grasp 1 domain. Positions 284, 298, and 300 each coordinate Mg(2+). Gln-284, Glu-298, and Asn-300 together coordinate Mn(2+). The oligomerization domain stretch occupies residues 402–546 (VGADHLLLEE…YSTYEEENES (145 aa)). Residues 547–929 (TRSAKESVIV…ALYKGFVASG (383 aa)) form a carbamoyl phosphate synthetic domain region. Positions 671–861 (EKALEILQIP…MANVATRVIL (191 aa)) constitute an ATP-grasp 2 domain. Residues Arg-707, Arg-746, Val-748, Glu-752, Gly-777, Val-778, His-779, Ser-780, Gln-820, and Glu-832 each contribute to the ATP site. Positions 820, 832, and 834 each coordinate Mg(2+). Positions 820, 832, and 834 each coordinate Mn(2+). Positions 930-1070 (TTMHDYGTVL…SEVKQPKVRV (141 aa)) constitute an MGS-like domain. Residues 930–1070 (TTMHDYGTVL…SEVKQPKVRV (141 aa)) form an allosteric domain region.

This sequence belongs to the CarB family. In terms of assembly, composed of two chains; the small (or glutamine) chain promotes the hydrolysis of glutamine to ammonia, which is used by the large (or ammonia) chain to synthesize carbamoyl phosphate. Tetramer of heterodimers (alpha,beta)4. Mg(2+) serves as cofactor. Requires Mn(2+) as cofactor.

The catalysed reaction is hydrogencarbonate + L-glutamine + 2 ATP + H2O = carbamoyl phosphate + L-glutamate + 2 ADP + phosphate + 2 H(+). The enzyme catalyses hydrogencarbonate + NH4(+) + 2 ATP = carbamoyl phosphate + 2 ADP + phosphate + 2 H(+). Its pathway is amino-acid biosynthesis; L-arginine biosynthesis; carbamoyl phosphate from bicarbonate: step 1/1. The protein operates within pyrimidine metabolism; UMP biosynthesis via de novo pathway; (S)-dihydroorotate from bicarbonate: step 1/3. Its function is as follows. Large subunit of the glutamine-dependent carbamoyl phosphate synthetase (CPSase). CPSase catalyzes the formation of carbamoyl phosphate from the ammonia moiety of glutamine, carbonate, and phosphate donated by ATP, constituting the first step of 2 biosynthetic pathways, one leading to arginine and/or urea and the other to pyrimidine nucleotides. The large subunit (synthetase) binds the substrates ammonia (free or transferred from glutamine from the small subunit), hydrogencarbonate and ATP and carries out an ATP-coupled ligase reaction, activating hydrogencarbonate by forming carboxy phosphate which reacts with ammonia to form carbamoyl phosphate. This is Carbamoyl phosphate synthase large chain from Listeria welshimeri serovar 6b (strain ATCC 35897 / DSM 20650 / CCUG 15529 / CIP 8149 / NCTC 11857 / SLCC 5334 / V8).